Consider the following 155-residue polypeptide: Large ribosomal subunit protein uL30 (155 aa).

It belongs to the universal ribosomal protein uL30 family. In terms of assembly, part of the 50S ribosomal subunit.

This Cenarchaeum symbiosum (strain A) protein is Large ribosomal subunit protein uL30.